The following is a 449-amino-acid chain: PGL/p-HBAD biosynthesis rhamnosyltransferase (449 aa).

This sequence belongs to the glycosyltransferase 28 family.

In terms of biological role, catalyzes the transfer of the first rhamnosyl residue on p-hydroxybenzoic acid or phenolphthiocerol derivatives to form, after O-methylation at position 2 of the sugar unit, mono-O-methyl-glycosyl-p-hydroxybenzoic acid derivative (p-HBAD I) and 2-O-methyl-rhamnosyl-phenolphthiocerol dimycocerosate (also called mycoside B) during p-hydroxybenzoic acid derivatives (p-HBAD) and glycosylated phenolphthiocerol dimycocerosates (PGL) biosynthesis. This chain is PGL/p-HBAD biosynthesis rhamnosyltransferase, found in Mycobacterium bovis (strain BCG / Pasteur 1173P2).